Consider the following 285-residue polypeptide: RNA polymerase sigma factor RpoH (285 aa).

Residues 53–122 form a sigma-70 factor domain-2 region; sequence LILSHLRFVA…IHEYVLRNWR (70 aa). The Interaction with polymerase core subunit RpoC signature appears at 77–80; sequence DLIQ. Residues 229–281 are sigma-70 factor domain-4; that stretch reads ALEGLDERSQHIIRARWLDDDNKSTLQELADQYGVSAERVRQLEKNAMKKLKM. Positions 254–273 form a DNA-binding region, H-T-H motif; it reads LQELADQYGVSAERVRQLEK.

This sequence belongs to the sigma-70 factor family. RpoH subfamily. In terms of assembly, interacts with the RNA polymerase core enzyme.

The protein localises to the cytoplasm. In terms of biological role, sigma factors are initiation factors that promote the attachment of RNA polymerase to specific initiation sites and are then released. This sigma factor is involved in regulation of expression of heat shock genes. This is RNA polymerase sigma factor RpoH from Serratia marcescens.